The sequence spans 118 residues: V-type proton ATPase subunit G 3 (118 aa).

A compositionally biased stretch (polar residues) spans 1-12; sequence MASQSQGIQQLL. The interval 1-37 is disordered; the sequence is MASQSQGIQQLLQAEKRAKDKLEEAKKRKNKRLRQAK. Residues 3 to 53 are a coiled coil; the sequence is SQSQGIQQLLQAEKRAKDKLEEAKKRKNKRLRQAKEEATADIDQYRLKREG. Residues 14–26 show a composition bias toward basic and acidic residues; that stretch reads AEKRAKDKLEEAK.

This sequence belongs to the V-ATPase G subunit family. V-ATPase is a heteromultimeric enzyme made up of two complexes: the ATP-hydrolytic V1 complex and the proton translocation V0 complex. The V1 complex consists of three catalytic AB heterodimers that form a heterohexamer, three peripheral stalks each consisting of EG heterodimers, one central rotor including subunits D and F, and the regulatory subunits C and H. The proton translocation complex V0 consists of the proton transport subunit a, a ring of proteolipid subunits c9c'', rotary subunit d, subunits e and f, and two accessory subunits.

Its function is as follows. Subunit of the V1 complex of vacuolar(H+)-ATPase (V-ATPase), a multisubunit enzyme composed of a peripheral complex (V1) that hydrolyzes ATP and a membrane integral complex (V0) that translocates protons. V-ATPase is responsible for acidifying and maintaining the pH of intracellular compartments and in some cell types, is targeted to the plasma membrane, where it is responsible for acidifying the extracellular environment. This is V-type proton ATPase subunit G 3 (atp6v1g3) from Xenopus tropicalis (Western clawed frog).